The sequence spans 494 residues: Cytochrome P450 monooxygenase ccsD (494 aa).

A helical membrane pass occupies residues 5–25 (ISPRTLVLLAVTCSLLVLYFS). C438 lines the heme pocket. N-linked (GlcNAc...) asparagine glycosylation is found at N445 and N477.

Belongs to the cytochrome P450 family. The cofactor is heme.

It is found in the membrane. It participates in mycotoxin biosynthesis. Cytochrome P450 monooxygenase; part of the gene cluster that mediates the biosynthesis of a family of the mycotoxins cytochalasins E and K. The hybrid PKS-NRPS synthetase ccsA and the enoyl reductase ccsC are responsible for fusion of phenylalanine with an octaketide backbone and subsequent release of the stable tetramic acid precursor. The polyketide synthase module (PKS) of the PKS-NRPS ccsA is responsible for the synthesis of the octaketide backbone. The downstream nonribosomal peptide synthetase (NRPS) amidates the carboxyl end of the octaketide with a phenylalanine. A reductase-like domain (R) at the C-terminus catalyzes the reductive release of the polyketide-amino acid intermediate. Because ccsA lacks a designated enoylreductase (ER) domain, the required activity is provided the enoyl reductase ccsC. Upon formation of the 11-membered carbocycle-fused perhydroisoindolone intermediate, a number of oxidative steps are required to afford the final cytochalasin E and K, including two hydroxylations at C17 and C18, one alcohol oxidation at C17, one epoxidation at C6 and C7 and two Baeyer-Villiger oxidations. The oxidative modification at C17, C18 and the C6-C7 epoxidation are likely to be catalyzed by the two cytochrome P450 oxygenases ccsD and ccsG. CcsD may be responsible for the epoxidation of the C6-C7 double bond. CcsG may be responsible for the successive oxidative modifications at C17 and C18. The double Baeyer-Villiger oxidations of ketocytochalasin to precytochalasin and cytochalasin Z(16) are among the final steps leading to cytochalasin E and K and are catalyzed by ccsB. The first oxygen insertion step follows that of the classic BVMO mechanism, generating the ester precytochalasin. Release of precytochalasin into an aqueous environment can generate the shunt product iso-precytochalasin through spontaneous isomerization. Alternatively, precytochalasin can undergo further oxidation by ccsB to yield the in-line carbonate-containing cytochalasin Z(16). Cytochalasin Z(16) is a precursor to cytochalasin E and cytochalasin K, whereas iso-precytochalasin is a precursor to cytochalasin Z(17) and rosellichalasin. The hydrolyase ccsE may catalyze hydrolysis of epoxide bond in cytochalasin E to afford cytochalasin K. The function of ccsF has not been assigned but it may play a role in post-PKS-NRPS biosynthetic step, resistance or transport of cytochalasins and related PKS-NRPS products. In Aspergillus clavatus (strain ATCC 1007 / CBS 513.65 / DSM 816 / NCTC 3887 / NRRL 1 / QM 1276 / 107), this protein is Cytochrome P450 monooxygenase ccsD.